The chain runs to 88 residues: Small ribosomal subunit protein bS20 (88 aa).

Residues 1 to 28 form a disordered region; the sequence is MANTVQARKRARQAVKQNEHNSSLRSKL.

This sequence belongs to the bacterial ribosomal protein bS20 family.

In terms of biological role, binds directly to 16S ribosomal RNA. The sequence is that of Small ribosomal subunit protein bS20 from Polynucleobacter necessarius subsp. necessarius (strain STIR1).